The chain runs to 1140 residues: Condensin-2 complex subunit G2 (1140 aa).

Residues 460–493 (LLPALKSSLHDSSEKVRVAFVGMLLKIKAARAAK) form an HEAT repeat.

As to quaternary structure, component of the condensin-2 complex, which contains the smc2 and smc4 heterodimer, and three non SMC subunits that probably regulate the complex: ncaph2, ncapd3 and ncapg2.

It is found in the nucleus. In terms of biological role, regulatory subunit of the condensin-2 complex, a complex which establishes mitotic chromosome architecture and is involved in physical rigidity of the chromatid axis. Plays a role in the embryonic development of the head and kidney structures. The chain is Condensin-2 complex subunit G2 from Danio rerio (Zebrafish).